The chain runs to 121 residues: ATP synthase epsilon chain (121 aa).

It belongs to the ATPase epsilon chain family. F-type ATPases have 2 components, CF(1) - the catalytic core - and CF(0) - the membrane proton channel. CF(1) has five subunits: alpha(3), beta(3), gamma(1), delta(1), epsilon(1). CF(0) has three main subunits: a, b and c.

The protein resides in the cell membrane. In terms of biological role, produces ATP from ADP in the presence of a proton gradient across the membrane. The polypeptide is ATP synthase epsilon chain (Mycobacterium sp. (strain JLS)).